The chain runs to 1040 residues: DIS3-like exonuclease 1 (1040 aa).

The CSD1 domain occupies 232–310 (AGIKSGRYKQ…KGRTGALCEN (79 aa)). One can recognise a CSD2 domain in the interval 360 to 426 (VLVMPWDYRI…AEIATILVEN (67 aa)). One can recognise an RNB domain in the interval 459–808 (RLDLRETHLV…VHRLLLAAVN (350 aa)).

Belongs to the RNR ribonuclease family. Component of the RNA exosome complex. Mg(2+) is required as a cofactor.

The protein localises to the cytoplasm. The catalysed reaction is Exonucleolytic cleavage in the 3'- to 5'-direction to yield nucleoside 5'-phosphates.. Its function is as follows. Catalytic component of the RNA exosome complex which has 3'-&gt;5' exoribonuclease activity and participates in a multitude of cellular RNA processing and degradation events. The protein is DIS3-like exonuclease 1 (dis3l) of Xenopus laevis (African clawed frog).